A 147-amino-acid chain; its full sequence is Large ribosomal subunit protein uL15 (147 aa).

A disordered region spans residues 1-58; it reads MKLHELKPAQGSTKAPKRLGRGIGSGTGKTSGKGHKGQKARAGGGVRPGFEGGQQPLA. 2 stretches are compositionally biased toward gly residues: residues 21–31 and 42–52; these read RGIGSGTGKTS and AGGGVRPGFEG.

Belongs to the universal ribosomal protein uL15 family. Part of the 50S ribosomal subunit.

Binds to the 23S rRNA. The chain is Large ribosomal subunit protein uL15 from Desulfitobacterium hafniense (strain Y51).